A 260-amino-acid polypeptide reads, in one-letter code: Snake venom serine protease KN14 (260 aa).

A signal peptide spans M1–A18. Residues Q19 to L24 constitute a propeptide that is removed on maturation. The Peptidase S1 domain occupies V25–A251. 5 cysteine pairs are disulfide-bonded: C31–C165, C100–C258, C144–C212, C176–C191, and C202–C227. H67 serves as the catalytic Charge relay system. N105 carries an N-linked (GlcNAc...) asparagine glycan. Catalysis depends on D112, which acts as the Charge relay system. N172 carries N-linked (GlcNAc...) asparagine glycosylation. S206 (charge relay system) is an active-site residue. Residues N213 and N255 are each glycosylated (N-linked (GlcNAc...) asparagine).

This sequence belongs to the peptidase S1 family. Snake venom subfamily. Monomer. As to expression, expressed by the venom gland.

It is found in the secreted. Functionally, snake venom serine protease that may act in the hemostasis system of the prey. The chain is Snake venom serine protease KN14 from Trimeresurus stejnegeri (Chinese green tree viper).